A 1401-amino-acid chain; its full sequence is DNA-directed RNA polymerase subunit beta' (1401 aa).

Zn(2+) contacts are provided by Cys70, Cys72, Cys85, and Cys88. Residues Asp460, Asp462, and Asp464 each contribute to the Mg(2+) site. Residues Cys808, Cys882, Cys889, and Cys892 each contribute to the Zn(2+) site.

The protein belongs to the RNA polymerase beta' chain family. In terms of assembly, the RNAP catalytic core consists of 2 alpha, 1 beta, 1 beta' and 1 omega subunit. When a sigma factor is associated with the core the holoenzyme is formed, which can initiate transcription. Mg(2+) is required as a cofactor. The cofactor is Zn(2+).

It carries out the reaction RNA(n) + a ribonucleoside 5'-triphosphate = RNA(n+1) + diphosphate. Its function is as follows. DNA-dependent RNA polymerase catalyzes the transcription of DNA into RNA using the four ribonucleoside triphosphates as substrates. This chain is DNA-directed RNA polymerase subunit beta', found in Legionella pneumophila (strain Lens).